The primary structure comprises 510 residues: Serine carboxypeptidase-like 48 (510 aa).

A signal peptide spans 1 to 25; that stretch reads MDSKTTFLTFLLCIFIFSHFSPSTS. 3 disulfides stabilise this stretch: C141–C383, C309–C326, and C349–C354. N-linked (GlcNAc...) asparagine glycans are attached at residues N158 and N159. S231 is a catalytic residue. Catalysis depends on residues D421 and H478.

Belongs to the peptidase S10 family. In terms of tissue distribution, ubiquitous.

The protein resides in the secreted. Functionally, probable carboxypeptidase. The protein is Serine carboxypeptidase-like 48 (SCPL48) of Arabidopsis thaliana (Mouse-ear cress).